A 217-amino-acid chain; its full sequence is Probable transaldolase (217 aa).

The active-site Schiff-base intermediate with substrate is lysine 83.

This sequence belongs to the transaldolase family. Type 3B subfamily.

The protein resides in the cytoplasm. It catalyses the reaction D-sedoheptulose 7-phosphate + D-glyceraldehyde 3-phosphate = D-erythrose 4-phosphate + beta-D-fructose 6-phosphate. The protein operates within carbohydrate degradation; pentose phosphate pathway; D-glyceraldehyde 3-phosphate and beta-D-fructose 6-phosphate from D-ribose 5-phosphate and D-xylulose 5-phosphate (non-oxidative stage): step 2/3. Transaldolase is important for the balance of metabolites in the pentose-phosphate pathway. This Bartonella bacilliformis (strain ATCC 35685 / KC583 / Herrer 020/F12,63) protein is Probable transaldolase.